The primary structure comprises 282 residues: 3-methyl-2-oxobutanoate hydroxymethyltransferase (282 aa).

The Mg(2+) site is built by aspartate 45 and aspartate 84. Residues 45-46 (DS), aspartate 84, and lysine 114 each bind 3-methyl-2-oxobutanoate. A Mg(2+)-binding site is contributed by glutamate 116. Glutamate 183 functions as the Proton acceptor in the catalytic mechanism.

Belongs to the PanB family. In terms of assembly, homodecamer; pentamer of dimers. Mg(2+) serves as cofactor.

It is found in the cytoplasm. The catalysed reaction is 3-methyl-2-oxobutanoate + (6R)-5,10-methylene-5,6,7,8-tetrahydrofolate + H2O = 2-dehydropantoate + (6S)-5,6,7,8-tetrahydrofolate. It participates in cofactor biosynthesis; (R)-pantothenate biosynthesis; (R)-pantoate from 3-methyl-2-oxobutanoate: step 1/2. Its function is as follows. Catalyzes the reversible reaction in which hydroxymethyl group from 5,10-methylenetetrahydrofolate is transferred onto alpha-ketoisovalerate to form ketopantoate. In Syntrophobacter fumaroxidans (strain DSM 10017 / MPOB), this protein is 3-methyl-2-oxobutanoate hydroxymethyltransferase.